Consider the following 1534-residue polypeptide: Dicer-like protein 2 (1534 aa).

Basic and acidic residues predominate over residues 1 to 10 (MDQDPRKDNP). The interval 1–36 (MDQDPRKDNPVEMDVDRDDSSQDPDDNESFKSALDE) is disordered. Residues 11–27 (VEMDVDRDDSSQDPDDN) are compositionally biased toward acidic residues. The Helicase ATP-binding domain maps to 65–249 (TPAALTARAY…IEKLEQVLDA (185 aa)). An ATP-binding site is contributed by 78 to 85 (MFEASLKQ). Residues 192–195 (DEAH) carry the DEAH box motif. The Helicase C-terminal domain occupies 404–575 (KVQTLLKVLA…NAELELLDDP (172 aa)). Residues 597–700 (ARSHLNHFCA…LPTKVSDFLA (104 aa)) form the Dicer dsRNA-binding fold domain. RNase III domains are found at residues 959 to 1107 (MSLV…MCGG) and 1153 to 1353 (LEPL…VDSG). Mg(2+) is bound by residues Glu-1193, Asp-1339, and Glu-1342. Residues 1383–1483 (HPNVELQILA…AEKGCLVIKA (101 aa)) form the DRBM domain. Basic and acidic residues predominate over residues 1492–1504 (KAAAKEDKGHNTE). Residues 1492 to 1534 (KAAAKEDKGHNTENGDANADNGQSGEKEEVPDCRDADGDTVMN) form a disordered region. Residues 1505–1515 (NGDANADNGQS) are compositionally biased toward polar residues. The span at 1516–1528 (GEKEEVPDCRDAD) shows a compositional bias: basic and acidic residues.

Belongs to the helicase family. Dicer subfamily. Requires Mg(2+) as cofactor. Mn(2+) serves as cofactor.

Its function is as follows. Dicer-like endonuclease involved in cleaving double-stranded RNA in the RNA interference (RNAi) pathway. Produces 21 to 25 bp dsRNAs (siRNAs) which target the selective destruction of homologous RNAs leading to sequence-specific suppression of gene expression, called post-transcriptional gene silencing (PTGS). Part of a broad host defense response against viral infection and transposons. Controls the expression of the non-LTR retrotransposon Tad in the African strain, Adiomopoume. The chain is Dicer-like protein 2 (dcl-2) from Neurospora crassa (strain ATCC 24698 / 74-OR23-1A / CBS 708.71 / DSM 1257 / FGSC 987).